A 213-amino-acid chain; its full sequence is CASP-like protein 2A1 (213 aa).

Topologically, residues 1-41 are cytoplasmic; the sequence is MSKMAEEKAAAVGGLGGAGAADAAQQQQLAAGEAAAARVRP. The helical transmembrane segment at 42 to 62 threads the bilayer; it reads VETLLRAAPLGLCVAAMTVML. Topologically, residues 63–83 are extracellular; it reads RNQQSNEYGAVAYSDLGGFKY. Residues 84–104 traverse the membrane as a helical segment; sequence LVYANGLCAAYSLVSAFYTAV. Topologically, residues 105-113 are cytoplasmic; that stretch reads PRPATVSRS. The helical transmembrane segment at 114–134 threads the bilayer; sequence WLVFLLDQVFTYLILAAGAAA. Over 135–166 the chain is Extracellular; it reads AELLYLAYNGDKEVTWSEACGVFGSFCRQART. Residues 167–187 traverse the membrane as a helical segment; that stretch reads SVAITFGTVLCFILLSLISSY. Topologically, residues 188-213 are cytoplasmic; sequence RLFSAYEAPPSSALGSKGVEIAAYPR.

The protein belongs to the Casparian strip membrane proteins (CASP) family. As to quaternary structure, homodimer and heterodimers.

The protein localises to the cell membrane. The polypeptide is CASP-like protein 2A1 (Zea mays (Maize)).